The following is a 456-amino-acid chain: MNYPAEPFRIKSVETVSMISRDERVKKMQEAGYNTFLLNSKDIYIDLLTDSGTNAMSDKQWAGMMIGDEAYAGSENFYHLEKTVKELFGFKHIVPTHQGRGAENLLSQLAIKPGQYVAGNMYFTTTRFHQEKNGATFVDIVRDEAHDASLNLPFKGDIDLNKLATLIKEKGAENIAYICLAVTVNLAGGQPVSMANMRAVHEMASTYGIKIFYDATRCVENAYFIKEQEAGYENVSIKDIVHEMFSYADGCTMSGKKDCLVNIGGFLCMNDEEMFSAAKELVVVYEGMPSYGGLAGRDMEAMAIGLREAMQYEYIEHRVKQVRYLGDKLREAGVPIVEPTGGHAVFLDARRFCPHLTQDQFPAQSLAASIYMETGVRSMERGIVSAGRSKETGENHRPKLETVRLTIPRRVYTYAHMDVVADGIIKLYQHKEDIRGLTFVYEPKQLRFFTARFDFI.

K257 carries the post-translational modification N6-(pyridoxal phosphate)lysine.

This sequence belongs to the beta-eliminating lyase family. In terms of assembly, homotetramer. Requires pyridoxal 5'-phosphate as cofactor. Contains L-DOPA (3',4'-dihydroxyphenylalanine).

The protein resides in the cytoplasm. It carries out the reaction L-tyrosine + H2O = phenol + pyruvate + NH4(+). The polypeptide is Tyrosine phenol-lyase (tpl) (Enterobacter agglomerans (Erwinia herbicola)).